Consider the following 98-residue polypeptide: Cell cycle protein GpsB (98 aa).

Positions 34 to 71 (LDIVIKDYEAFQQELDELRQENARLKRQVEELQKRPTT) form a coiled coil.

The protein belongs to the GpsB family. In terms of assembly, forms polymers through the coiled coil domains. Interacts with PBP1, MreC and EzrA.

The protein resides in the cytoplasm. Functionally, divisome component that associates with the complex late in its assembly, after the Z-ring is formed, and is dependent on DivIC and PBP2B for its recruitment to the divisome. Together with EzrA, is a key component of the system that regulates PBP1 localization during cell cycle progression. Its main role could be the removal of PBP1 from the cell pole after pole maturation is completed. Also contributes to the recruitment of PBP1 to the division complex. Not essential for septum formation. The protein is Cell cycle protein GpsB of Geobacillus thermodenitrificans (strain NG80-2).